The primary structure comprises 94 residues: Putative membrane protein insertion efficiency factor (94 aa).

This sequence belongs to the UPF0161 family.

It is found in the cell inner membrane. In terms of biological role, could be involved in insertion of integral membrane proteins into the membrane. The polypeptide is Putative membrane protein insertion efficiency factor (Albidiferax ferrireducens (strain ATCC BAA-621 / DSM 15236 / T118) (Rhodoferax ferrireducens)).